We begin with the raw amino-acid sequence, 624 residues long: tRNA uridine 5-carboxymethylaminomethyl modification enzyme MnmG (624 aa).

Residues 14 to 19, Val-126, and Ser-181 each bind FAD; that span reads GGGHAG. 273 to 287 contributes to the NAD(+) binding site; that stretch reads GPRYCPSIEDKVVRF. Gln-370 is a binding site for FAD.

This sequence belongs to the MnmG family. Homodimer. Heterotetramer of two MnmE and two MnmG subunits. The cofactor is FAD.

Its subcellular location is the cytoplasm. In terms of biological role, NAD-binding protein involved in the addition of a carboxymethylaminomethyl (cmnm) group at the wobble position (U34) of certain tRNAs, forming tRNA-cmnm(5)s(2)U34. The protein is tRNA uridine 5-carboxymethylaminomethyl modification enzyme MnmG of Geotalea uraniireducens (strain Rf4) (Geobacter uraniireducens).